Consider the following 721-residue polypeptide: DNA ligase (721 aa).

A compositionally biased stretch (low complexity) spans 1–19 (MTAKKQGAQASASAPSGDS). Positions 1-23 (MTAKKQGAQASASAPSGDSPAER) are disordered. Residues 48–52 (DADYD), 97–98 (SL), and Glu-162 contribute to the NAD(+) site. The N6-AMP-lysine intermediate role is filled by Lys-164. Arg-185, Glu-221, Lys-338, and Lys-362 together coordinate NAD(+). Zn(2+)-binding residues include Cys-456, Cys-459, Cys-474, and Cys-480. In terms of domain architecture, BRCT spans 639–721 (RAPLPLAGKT…LKLLAEVGAA (83 aa)).

Belongs to the NAD-dependent DNA ligase family. LigA subfamily. The cofactor is Mg(2+). Mn(2+) serves as cofactor.

It catalyses the reaction NAD(+) + (deoxyribonucleotide)n-3'-hydroxyl + 5'-phospho-(deoxyribonucleotide)m = (deoxyribonucleotide)n+m + AMP + beta-nicotinamide D-nucleotide.. Functionally, DNA ligase that catalyzes the formation of phosphodiester linkages between 5'-phosphoryl and 3'-hydroxyl groups in double-stranded DNA using NAD as a coenzyme and as the energy source for the reaction. It is essential for DNA replication and repair of damaged DNA. This is DNA ligase from Cupriavidus metallidurans (strain ATCC 43123 / DSM 2839 / NBRC 102507 / CH34) (Ralstonia metallidurans).